The sequence spans 538 residues: Chaperonin GroEL (538 aa).

ATP contacts are provided by residues 29-32, 86-90, glycine 413, 477-479, and aspartate 493; these read TLGP, DGTTT, and NAA.

This sequence belongs to the chaperonin (HSP60) family. Forms a cylinder of 14 subunits composed of two heptameric rings stacked back-to-back. Interacts with the co-chaperonin GroES.

Its subcellular location is the cytoplasm. The catalysed reaction is ATP + H2O + a folded polypeptide = ADP + phosphate + an unfolded polypeptide.. Functionally, together with its co-chaperonin GroES, plays an essential role in assisting protein folding. The GroEL-GroES system forms a nano-cage that allows encapsulation of the non-native substrate proteins and provides a physical environment optimized to promote and accelerate protein folding. This is Chaperonin GroEL from Bifidobacterium adolescentis (strain ATCC 15703 / DSM 20083 / NCTC 11814 / E194a).